Consider the following 360-residue polypeptide: DNA replication and repair protein RecF (360 aa).

30–37 (GHNGSGKT) serves as a coordination point for ATP.

Belongs to the RecF family.

It is found in the cytoplasm. The RecF protein is involved in DNA metabolism; it is required for DNA replication and normal SOS inducibility. RecF binds preferentially to single-stranded, linear DNA. It also seems to bind ATP. This Shewanella denitrificans (strain OS217 / ATCC BAA-1090 / DSM 15013) protein is DNA replication and repair protein RecF.